We begin with the raw amino-acid sequence, 352 residues long: MVHKVSQREFSRCYKRNCDCICRKPKQRRNVYLNYSLELLITIFKEVIPNLPMDKKIAFVKDYGAYLKVEKGLITCKIKNQVKWSIAPTELHSIVVLTNSSISSEVVKVANEYGIEIVFFNKHEPYAKLIPAKYAGSFKVWLKQLTAWKRRKVEFAKAFIYGKVHNQWVTLRYYERKYGYNLTSQELDRLAREITFVNTAEEVMQKEAEAAKVYWRGVKSLLPKSLGFKGRMKRVSDNLDPFNRALNIGYGMLRKVVWGAVISVGLNPYIGFLHKFRSGRISLVFDLMEEFRSPFVDRKLIGLARESADKVTDLKTVYSLFSDVKEDEIYTQARRLVNAILNDEEYRPYLAK.

Mn(2+) contacts are provided by Glu-207, His-274, and Glu-289.

Belongs to the CRISPR-associated endonuclease Cas1 family. Homodimer, forms a heterotetramer with a Cas2 homodimer. It depends on Mg(2+) as a cofactor. The cofactor is Mn(2+).

CRISPR (clustered regularly interspaced short palindromic repeat), is an adaptive immune system that provides protection against mobile genetic elements (viruses, transposable elements and conjugative plasmids). CRISPR clusters contain spacers, sequences complementary to antecedent mobile elements, and target invading nucleic acids. CRISPR clusters are transcribed and processed into CRISPR RNA (crRNA). Acts as a dsDNA endonuclease. Involved in the integration of spacer DNA into the CRISPR cassette. The protein is CRISPR-associated endonuclease Cas1 1 of Saccharolobus solfataricus (strain ATCC 35092 / DSM 1617 / JCM 11322 / P2) (Sulfolobus solfataricus).